The sequence spans 202 residues: Adenosylcobalamin/alpha-ribazole phosphatase (202 aa).

Residue histidine 8 is the Tele-phosphohistidine intermediate of the active site. Glutamate 81 functions as the Proton donor/acceptor in the catalytic mechanism.

The protein belongs to the phosphoglycerate mutase family. Monomer.

It carries out the reaction adenosylcob(III)alamin 5'-phosphate + H2O = adenosylcob(III)alamin + phosphate. It catalyses the reaction alpha-ribazole 5'-phosphate + H2O = alpha-ribazole + phosphate. It functions in the pathway nucleoside biosynthesis; alpha-ribazole biosynthesis; alpha-ribazole from 5,6-dimethylbenzimidazole: step 2/2. Catalyzes the conversion of adenosylcobalamin 5'-phosphate to adenosylcobalamin (vitamin B12); involved in the assembly of the nucleotide loop of cobalamin. Also catalyzes the hydrolysis of the phospho group from alpha-ribazole 5'-phosphate to form alpha-ribazole. The protein is Adenosylcobalamin/alpha-ribazole phosphatase (cobC) of Salmonella typhimurium (strain LT2 / SGSC1412 / ATCC 700720).